Here is a 351-residue protein sequence, read N- to C-terminus: Calcium release-activated calcium channel protein 1 (351 aa).

A compositionally biased stretch (polar residues) spans 1–21 (MSVWTTANNSGLETPTKSPIT). 2 disordered regions span residues 1-39 (MSVW…TGNH) and 71-141 (HAHP…EDLH). Topologically, residues 1–163 (MSVWTTANNS…SRAKLKASSK (163 aa)) are cytoplasmic. Low complexity-rich tracts occupy residues 22–33 (SSVPRAARSSAV) and 80–93 (SNSP…SNNS). Over residues 94–106 (AGFQRTSISNSLL) the composition is skewed to polar residues. The helical transmembrane segment at 164 to 181 (TSALLSGFAMVAMVEVQL) threads the bilayer. Over 182–191 (DHDTNVPPGM) the chain is Extracellular. The helical transmembrane segment at 192 to 212 (LIAFAICTTLLVAVHMLALMI) threads the bilayer. At 213-248 (STCILPNIETVCNLHSISLVHESPHERLHWYIETAW) the chain is on the cytoplasmic side. The chain crosses the membrane as a helical span at residues 249–269 (AFSTLLGLILFLLEIAILCWV). Topologically, residues 270–277 (KFYDLSPP) are extracellular. The chain crosses the membrane as a helical span at residues 278–298 (AAWSACVVLIPVMIIFMAFAI). Topologically, residues 299-351 (HFYRSLVSHKYEVTVSGIRELEMLKEQMEQDHLEHHNNIRNNGMNYGASGDIV) are cytoplasmic.

The protein belongs to the Orai family. Hexamer.

The protein localises to the cell membrane. The catalysed reaction is Ca(2+)(in) = Ca(2+)(out). In terms of biological role, pore-forming subunit of inward rectifying Ca(2+) release-activated Ca(2+) (CRAC) channels. Assembles in hexameric CRAC channels that mediate Ca(2+) influx upon depletion of endoplasmic reticulum Ca(2+) store and channel activation by Ca(2+) sensor Stim, a process known as store-operated Ca(2+) entry (SOCE). Regulates transcription factor NFAT nuclear import. This chain is Calcium release-activated calcium channel protein 1, found in Drosophila melanogaster (Fruit fly).